Here is a 360-residue protein sequence, read N- to C-terminus: UDP-N-acetylglucosamine--N-acetylmuramyl-(pentapeptide) pyrophosphoryl-undecaprenol N-acetylglucosamine transferase (360 aa).

UDP-N-acetyl-alpha-D-glucosamine-binding positions include 13-15 (TGG), Asn-125, Arg-164, Ser-191, and Gln-290.

This sequence belongs to the glycosyltransferase 28 family. MurG subfamily.

The protein resides in the cell inner membrane. It catalyses the reaction di-trans,octa-cis-undecaprenyl diphospho-N-acetyl-alpha-D-muramoyl-L-alanyl-D-glutamyl-meso-2,6-diaminopimeloyl-D-alanyl-D-alanine + UDP-N-acetyl-alpha-D-glucosamine = di-trans,octa-cis-undecaprenyl diphospho-[N-acetyl-alpha-D-glucosaminyl-(1-&gt;4)]-N-acetyl-alpha-D-muramoyl-L-alanyl-D-glutamyl-meso-2,6-diaminopimeloyl-D-alanyl-D-alanine + UDP + H(+). Its pathway is cell wall biogenesis; peptidoglycan biosynthesis. Cell wall formation. Catalyzes the transfer of a GlcNAc subunit on undecaprenyl-pyrophosphoryl-MurNAc-pentapeptide (lipid intermediate I) to form undecaprenyl-pyrophosphoryl-MurNAc-(pentapeptide)GlcNAc (lipid intermediate II). The chain is UDP-N-acetylglucosamine--N-acetylmuramyl-(pentapeptide) pyrophosphoryl-undecaprenol N-acetylglucosamine transferase from Hahella chejuensis (strain KCTC 2396).